The primary structure comprises 156 residues: Small ribosomal subunit protein uS7 (156 aa).

It belongs to the universal ribosomal protein uS7 family. As to quaternary structure, part of the 30S ribosomal subunit. Contacts proteins S9 and S11.

Its function is as follows. One of the primary rRNA binding proteins, it binds directly to 16S rRNA where it nucleates assembly of the head domain of the 30S subunit. Is located at the subunit interface close to the decoding center, probably blocks exit of the E-site tRNA. This Nitrosomonas europaea (strain ATCC 19718 / CIP 103999 / KCTC 2705 / NBRC 14298) protein is Small ribosomal subunit protein uS7.